The chain runs to 429 residues: RNA-binding protein BRN2 (429 aa).

RRM domains are found at residues 12 to 93 (VKLF…YADG), 100 to 180 (HKLF…WADT), and 330 to 408 (ANLF…LKRD). The interval 410 to 429 (GQQQQQQQSKNPLFNGLLNS) is disordered. Polar residues predominate over residues 418 to 429 (SKNPLFNGLLNS).

In terms of tissue distribution, expressed in roots, stems, flowers and siliques.

It localises to the cytoplasm. RNA-binding protein involved in the regulation of flowering time. Acts as a repressor of the activity of SOC1, a transcriptional activator of flowering time. Binds to the 3'-UTR of SOC1 mRNA in the cytoplasm and participates in SOC1 mRNA decay, mediated by the distal region of the SOC1 3'-UTR. This chain is RNA-binding protein BRN2, found in Arabidopsis thaliana (Mouse-ear cress).